Reading from the N-terminus, the 365-residue chain is tRNA/tmRNA (uracil-C(5))-methyltransferase (365 aa).

S-adenosyl-L-methionine-binding residues include glutamine 189, tyrosine 217, asparagine 222, glutamate 238, and aspartate 298. Cysteine 323 serves as the catalytic Nucleophile. Glutamate 357 acts as the Proton acceptor in catalysis.

Belongs to the class I-like SAM-binding methyltransferase superfamily. RNA M5U methyltransferase family. TrmA subfamily.

The catalysed reaction is uridine(54) in tRNA + S-adenosyl-L-methionine = 5-methyluridine(54) in tRNA + S-adenosyl-L-homocysteine + H(+). It carries out the reaction uridine(341) in tmRNA + S-adenosyl-L-methionine = 5-methyluridine(341) in tmRNA + S-adenosyl-L-homocysteine + H(+). Its function is as follows. Dual-specificity methyltransferase that catalyzes the formation of 5-methyluridine at position 54 (m5U54) in all tRNAs, and that of position 341 (m5U341) in tmRNA (transfer-mRNA). The sequence is that of tRNA/tmRNA (uracil-C(5))-methyltransferase from Shewanella frigidimarina (strain NCIMB 400).